A 180-amino-acid polypeptide reads, in one-letter code: ATP synthase subunit delta (180 aa).

It belongs to the ATPase delta chain family. F-type ATPases have 2 components, F(1) - the catalytic core - and F(0) - the membrane proton channel. F(1) has five subunits: alpha(3), beta(3), gamma(1), delta(1), epsilon(1). F(0) has three main subunits: a(1), b(2) and c(10-14). The alpha and beta chains form an alternating ring which encloses part of the gamma chain. F(1) is attached to F(0) by a central stalk formed by the gamma and epsilon chains, while a peripheral stalk is formed by the delta and b chains.

It is found in the cell inner membrane. F(1)F(0) ATP synthase produces ATP from ADP in the presence of a proton or sodium gradient. F-type ATPases consist of two structural domains, F(1) containing the extramembraneous catalytic core and F(0) containing the membrane proton channel, linked together by a central stalk and a peripheral stalk. During catalysis, ATP synthesis in the catalytic domain of F(1) is coupled via a rotary mechanism of the central stalk subunits to proton translocation. In terms of biological role, this protein is part of the stalk that links CF(0) to CF(1). It either transmits conformational changes from CF(0) to CF(1) or is implicated in proton conduction. The sequence is that of ATP synthase subunit delta from Legionella pneumophila (strain Paris).